Consider the following 176-residue polypeptide: RNA pyrophosphohydrolase (176 aa).

Residues 6 to 149 enclose the Nudix hydrolase domain; the sequence is GYRPNVGIVI…KRDVYRRVMK (144 aa). Residues 38 to 59 carry the Nudix box motif; sequence GGINPGESAEQAMYRELFEEVG.

This sequence belongs to the Nudix hydrolase family. RppH subfamily. The cofactor is a divalent metal cation.

In terms of biological role, accelerates the degradation of transcripts by removing pyrophosphate from the 5'-end of triphosphorylated RNA, leading to a more labile monophosphorylated state that can stimulate subsequent ribonuclease cleavage. The sequence is that of RNA pyrophosphohydrolase from Klebsiella pneumoniae (strain 342).